Here is a 376-residue protein sequence, read N- to C-terminus: D-alanine--D-alanine ligase (376 aa).

The ATP-grasp domain occupies 155 to 361 (KIIFEKAGIP…YPELIEKLID (207 aa)). 188–243 (EEKFSYPVFVKPSNAGSSVGVSKAHDKNELKEALIYAARYDRKVLIEEFINGREVE) contacts ATP. Asp314, Glu328, and Asn330 together coordinate Mg(2+).

The protein belongs to the D-alanine--D-alanine ligase family. Mg(2+) serves as cofactor. It depends on Mn(2+) as a cofactor.

It is found in the cytoplasm. It catalyses the reaction 2 D-alanine + ATP = D-alanyl-D-alanine + ADP + phosphate + H(+). The protein operates within cell wall biogenesis; peptidoglycan biosynthesis. Cell wall formation. The sequence is that of D-alanine--D-alanine ligase from Acetivibrio thermocellus (strain ATCC 27405 / DSM 1237 / JCM 9322 / NBRC 103400 / NCIMB 10682 / NRRL B-4536 / VPI 7372) (Clostridium thermocellum).